The sequence spans 1251 residues: Botulinum neurotoxin type E (1251 aa).

Residue H212 coordinates Zn(2+). E213 is a catalytic residue. Zn(2+)-binding residues include H216 and E251. C412 and C426 are disulfide-bonded. The segment at 423 to 819 (KSICIEINNG…ELNSMVIDTL (397 aa)) is translocation domain (TD). A belt region spans residues 466–515 (NDLDQVILNFNSESAPGLSDEKLNLTIQNDAYIPKYDSNGTSDIEQHDVN). The N-terminus of receptor binding domain (N-RBD) stretch occupies residues 845–1067 (KRIKSSSVLN…EIQTLYNNEP (223 aa)). Residues 1068–1251 (NANILKDFWG…ISEEHGWQEK (184 aa)) form a C-terminus of receptor binding domain (C-RBD) region. The Host ganglioside-binding motif motif lies at 1221-1224 (STWY).

The protein belongs to the peptidase M27 family. As to quaternary structure, heterodimer; disulfide-linked heterodimer of a light chain (LC) and a heavy chain (HC). The LC has the proteolytic/pharmacological activity, while the N- and C-terminal of the HC mediate channel formation and toxin binding, respectively. Interacts with host synaptic vesicle glycoproteins SV2A and SV2B which probably serve as coreceptors. The cofactor is Zn(2+).

The protein localises to the secreted. Its subcellular location is the host cytoplasm. The protein resides in the host cytosol. It localises to the host synapse. It is found in the host presynaptic cell membrane. The protein localises to the host cytoplasmic vesicle. Its subcellular location is the host secretory vesicle. The protein resides in the host synaptic vesicle membrane. The enzyme catalyses Limited hydrolysis of proteins of the neuroexocytosis apparatus, synaptobrevins, SNAP25 or syntaxin. No detected action on small molecule substrates.. In terms of biological role, botulinum toxin causes flaccid paralysis by inhibiting neurotransmitter (acetylcholine) release from the presynaptic membranes of nerve terminals of eukaryotic host skeletal and autonomic nervous system, with frequent heart or respiratory failure. Precursor of botulinum neurotoxin E which has 2 coreceptors; complex polysialylated gangliosides found on neural tissue and specific membrane-anchored proteins found in synaptic vesicles. Receptor proteins are exposed on host presynaptic cell membrane during neurotransmitter release, when the toxin heavy chain (HC) binds to them. Upon synaptic vesicle recycling the toxin is taken up via the endocytic pathway. When the pH of the toxin-containing endosome drops a structural rearrangement occurs so that the N-terminus of the HC forms pores that allows the light chain (LC) to translocate into the cytosol. Once in the cytosol the disulfide bond linking the 2 subunits is reduced and LC cleaves its target protein on synaptic vesicles, preventing their fusion with the cytoplasmic membrane and thus neurotransmitter release. Functionally, has proteolytic activity. After translocation into the eukaryotic host cytosol, LC hydrolyzes the '180-Arg-|-Ile-181' bond in SNAP25, blocking neurotransmitter release. Responsible for host epithelial cell transcytosis, host nerve cell targeting and translocation of light chain (LC) into host cytosol. Composed of 3 subdomains; the translocation domain (TD), and N-terminus and C-terminus of the receptor-binding domain (RBD). The RBD is responsible for the adherence of the toxin to the cell surface. It simultaneously recognizes 2 coreceptors; host polysialated gangliosides and the receptor proteins SV2A and SV2B in close proximity on host synaptic vesicles. Interaction with SV2 proteins requires SV2 glycosylation. The N-terminus of the TD wraps an extended belt around the perimeter of the LC, protecting Zn(2+) in the active site; it may also prevent premature LC dissociation from the translocation channel and protect toxin prior to translocation. The TD inserts into synaptic vesicle membrane to allow translocation into the host cytosol. Binds ganglioside GD1a in vitro. In Clostridium butyricum, this protein is Botulinum neurotoxin type E.